The primary structure comprises 333 residues: Adenosine deaminase (333 aa).

Residues His12 and His14 each coordinate Zn(2+). The substrate site is built by His14, Asp16, and Gly170. Zn(2+) is bound at residue His197. Residue Glu200 is the Proton donor of the active site. Asp278 contacts Zn(2+). Asp279 serves as a coordination point for substrate.

The protein belongs to the metallo-dependent hydrolases superfamily. Adenosine and AMP deaminases family. Adenosine deaminase subfamily. Zn(2+) serves as cofactor.

It carries out the reaction adenosine + H2O + H(+) = inosine + NH4(+). The catalysed reaction is 2'-deoxyadenosine + H2O + H(+) = 2'-deoxyinosine + NH4(+). In terms of biological role, catalyzes the hydrolytic deamination of adenosine and 2-deoxyadenosine. This is Adenosine deaminase from Salmonella agona (strain SL483).